The chain runs to 103 residues: Large ribosomal subunit protein bL21 (103 aa).

It belongs to the bacterial ribosomal protein bL21 family. As to quaternary structure, part of the 50S ribosomal subunit. Contacts protein L20.

This protein binds to 23S rRNA in the presence of protein L20. In Hamiltonella defensa subsp. Acyrthosiphon pisum (strain 5AT), this protein is Large ribosomal subunit protein bL21.